A 596-amino-acid chain; its full sequence is Uptake hydrogenase large subunit (596 aa).

4 residues coordinate Ni(2+): Cys-75, Cys-78, Cys-575, and Cys-578.

It belongs to the [NiFe]/[NiFeSe] hydrogenase large subunit family. In terms of assembly, heterodimer of a large and a small subunit. The cofactor is Ni(2+).

The protein localises to the cell membrane. The catalysed reaction is H2 + A = AH2. In terms of biological role, this enzyme recycles the H(2) produced by nitrogenase to increase the production of ATP and to protect nitrogenase against inhibition or damage by O(2) under carbon- or phosphate-limited conditions. The chain is Uptake hydrogenase large subunit (hupB) from Bradyrhizobium diazoefficiens (strain JCM 10833 / BCRC 13528 / IAM 13628 / NBRC 14792 / USDA 110).